The sequence spans 145 residues: MVAKILVVHGPNLNLLGRREPSIYGHTTLEDINRNLVAKAQAASVVLDTFQSNAEHELIDRVQEAMNDGTGFIIINPAALTHTSIALRDALAATNLPFVEIHLSNIYAREHFRHTSYFSDIAVGVISGLGAAGYELALQFALARQ.

The active-site Proton acceptor is the Tyr24. Substrate contacts are provided by Asn76, His82, and Asp89. Residue His102 is the Proton donor of the active site. Substrate contacts are provided by residues 103 to 104 (LS) and Arg113.

The protein belongs to the type-II 3-dehydroquinase family. As to quaternary structure, homododecamer.

It catalyses the reaction 3-dehydroquinate = 3-dehydroshikimate + H2O. The protein operates within metabolic intermediate biosynthesis; chorismate biosynthesis; chorismate from D-erythrose 4-phosphate and phosphoenolpyruvate: step 3/7. Its function is as follows. Catalyzes a trans-dehydration via an enolate intermediate. This chain is 3-dehydroquinate dehydratase, found in Nitrosomonas eutropha (strain DSM 101675 / C91 / Nm57).